The following is a 356-amino-acid chain: Torsin-like protein (356 aa).

The signal sequence occupies residues 1–18 (MKLDYVLLLLFHLCFVNT). 110–117 (GYTGSGKN) contacts ATP. Residues asparagine 125 and asparagine 250 are each glycosylated (N-linked (GlcNAc...) asparagine).

The protein belongs to the ClpA/ClpB family. Torsin subfamily.

The protein resides in the endoplasmic reticulum lumen. In terms of biological role, may serve as a molecular chaperone assisting in the proper folding of secreted and/or membrane proteins. The polypeptide is Torsin-like protein (ooc-5) (Caenorhabditis elegans).